Reading from the N-terminus, the 76-residue chain is Theta defensin subunit B (76 aa).

A signal peptide spans 1-22 (MRTFALLTAMLLLVALQPQAEA). A propeptide spanning residues 23–64 (RQARADEAAAQQQPGADDQGMAHSFTRPENAALPLSESAKGL) is cleaved from the precursor. Residues 24–54 (QARADEAAAQQQPGADDQGMAHSFTRPENAA) are disordered. The segment covering 30–44 (AAAQQQPGADDQGMA) has biased composition (low complexity). A Cyclopeptide (Arg-Cys) (interchain with C-73 in subunit A); in form BTD-1 cross-link involves residue arginine 65. Arginine 65 participates in a covalent cross-link: Cyclopeptide (Arg-Cys) (interchain with C-73 in subunit B); in form BTD-2. The cysteines at positions 68 and 73 are disulfide-linked. Residue cysteine 73 forms a Cyclopeptide (Cys-Arg) (interchain with R-65 in subunit A); in form BTD-1 linkage. A Cyclopeptide (Cys-Arg) (interchain with R-65 in subunit B); in form BTD-2 cross-link involves residue cysteine 73. A propeptide spanning residues 74 to 76 (QLL) is cleaved from the precursor.

The protein belongs to the alpha-defensin family. Theta subfamily. As to quaternary structure, BTD-1 is a cyclic heterodimer composed of subunits A and B; disulfide-linked. BTD-2 is a cyclic homodimer composed of two subunits B; disulfide-linked. In terms of processing, forms a cyclic peptide with subunit A (BTD-1), or subunit B (BTD-2). An additional intersubunit disulfide bond is formed.

In terms of biological role, BTD-1 and BTD-2 have antimicrobial activity against the Gram-negative bacterium E.coli ML35, the Gram-positive bacterium S.aureus 502a, and the fungus C.albicans 16820. BTD-2 is more effective against E.coli than BTD-1. The polypeptide is Theta defensin subunit B (BTDB) (Papio anubis (Olive baboon)).